We begin with the raw amino-acid sequence, 65 residues long: Large ribosomal subunit protein bL35 (65 aa).

Residues 1 to 20 are disordered; that stretch reads MPKMKTNSGSKKRFTLTGTG.

The protein belongs to the bacterial ribosomal protein bL35 family.

In Bacteroides thetaiotaomicron (strain ATCC 29148 / DSM 2079 / JCM 5827 / CCUG 10774 / NCTC 10582 / VPI-5482 / E50), this protein is Large ribosomal subunit protein bL35.